Reading from the N-terminus, the 81-residue chain is Photosystem I iron-sulfur center (81 aa).

2 4Fe-4S ferredoxin-type domains span residues 2 to 31 and 39 to 68; these read AHSV…MVPW and IASA…VRVY. Residues Cys-11, Cys-14, Cys-17, Cys-21, Cys-48, Cys-51, Cys-54, and Cys-58 each contribute to the [4Fe-4S] cluster site.

The eukaryotic PSI reaction center is composed of at least 11 subunits. The cofactor is [4Fe-4S] cluster.

The protein localises to the plastid. It localises to the chloroplast thylakoid membrane. It carries out the reaction reduced [plastocyanin] + hnu + oxidized [2Fe-2S]-[ferredoxin] = oxidized [plastocyanin] + reduced [2Fe-2S]-[ferredoxin]. In terms of biological role, apoprotein for the two 4Fe-4S centers FA and FB of photosystem I (PSI); essential for photochemical activity. FB is the terminal electron acceptor of PSI, donating electrons to ferredoxin. The C-terminus interacts with PsaA/B/D and helps assemble the protein into the PSI complex. Required for binding of PsaD and PsaE to PSI. PSI is a plastocyanin-ferredoxin oxidoreductase, converting photonic excitation into a charge separation, which transfers an electron from the donor P700 chlorophyll pair to the spectroscopically characterized acceptors A0, A1, FX, FA and FB in turn. In Mesostigma viride (Green alga), this protein is Photosystem I iron-sulfur center.